A 135-amino-acid polypeptide reads, in one-letter code: Holo-[acyl-carrier-protein] synthase (135 aa).

2 residues coordinate Mg(2+): D8 and E58.

It belongs to the P-Pant transferase superfamily. AcpS family. Mg(2+) is required as a cofactor.

The protein localises to the cytoplasm. It carries out the reaction apo-[ACP] + CoA = holo-[ACP] + adenosine 3',5'-bisphosphate + H(+). Its function is as follows. Transfers the 4'-phosphopantetheine moiety from coenzyme A to a Ser of acyl-carrier-protein. This Leuconostoc citreum (strain KM20) protein is Holo-[acyl-carrier-protein] synthase.